Here is a 443-residue protein sequence, read N- to C-terminus: D-aminoacyl-tRNA deacylase (443 aa).

This sequence belongs to the DtdA deacylase family. In terms of assembly, monomer. It depends on Zn(2+) as a cofactor.

The enzyme catalyses a D-aminoacyl-tRNA + H2O = a tRNA + a D-alpha-amino acid + H(+). The catalysed reaction is glycyl-tRNA(Ala) + H2O = tRNA(Ala) + glycine + H(+). Functionally, D-aminoacyl-tRNA deacylase with broad substrate specificity. By recycling D-aminoacyl-tRNA to D-amino acids and free tRNA molecules, this enzyme counteracts the toxicity associated with the formation of D-aminoacyl-tRNA entities in vivo. The chain is D-aminoacyl-tRNA deacylase from Methanocorpusculum labreanum (strain ATCC 43576 / DSM 4855 / Z).